The following is a 30-amino-acid chain: Natriuretic peptides A (30 aa).

Positions 1–3 are excised as a propeptide; the sequence is APR. A disulfide bridge links Cys-11 with Cys-27.

It belongs to the natriuretic peptide family. In terms of processing, cleaved upon secretion to produce the functional hormone.

It localises to the secreted. Hormone playing a key role in cardiovascular homeostasis through regulation of natriuresis, diuresis, and vasodilation. Has a cGMP-stimulating activity. This Pelophylax ridibundus (Marsh frog) protein is Natriuretic peptides A.